A 217-amino-acid polypeptide reads, in one-letter code: Protein-L-isoaspartate O-methyltransferase (217 aa).

Residue S61 is part of the active site.

Belongs to the methyltransferase superfamily. L-isoaspartyl/D-aspartyl protein methyltransferase family.

The protein resides in the cytoplasm. The catalysed reaction is [protein]-L-isoaspartate + S-adenosyl-L-methionine = [protein]-L-isoaspartate alpha-methyl ester + S-adenosyl-L-homocysteine. In terms of biological role, catalyzes the methyl esterification of L-isoaspartyl residues in peptides and proteins that result from spontaneous decomposition of normal L-aspartyl and L-asparaginyl residues. It plays a role in the repair and/or degradation of damaged proteins. This chain is Protein-L-isoaspartate O-methyltransferase, found in Brucella anthropi (strain ATCC 49188 / DSM 6882 / CCUG 24695 / JCM 21032 / LMG 3331 / NBRC 15819 / NCTC 12168 / Alc 37) (Ochrobactrum anthropi).